The primary structure comprises 488 residues: Probable G-protein coupled receptor Mth-like 12 (488 aa).

The first 17 residues, 1–17 (MFLWLKCFCTLIIVTIA), serve as a signal peptide directing secretion. Over 18 to 215 (KNSSAKIPHC…NRRCYRNVMP (198 aa)) the chain is Extracellular. N-linked (GlcNAc...) asparagine glycosylation is found at Asn-19, Asn-34, and Asn-55. Intrachain disulfides connect Cys-27–Cys-81, Cys-83–Cys-88, Cys-92–Cys-189, Cys-93–Cys-104, and Cys-155–Cys-209. N-linked (GlcNAc...) asparagine glycosylation is present at Asn-141. A helical membrane pass occupies residues 216 to 236 (GIAQLSVISVVGFILTLAVYL). Over 237 to 247 (SVEKLRNLLGK) the chain is Cytoplasmic. The helical transmembrane segment at 248-268 (CLICSLFSMFMEYFIWTMDYF) threads the bilayer. The Extracellular segment spans residues 269-283 (RLLQSICSAAGYMKY). A helical transmembrane segment spans residues 284 to 304 (FFSMSSYLWFSVVSFHLWELF). Residues 305-315 (TSLNRHEPQYR) lie on the Cytoplasmic side of the membrane. The chain crosses the membrane as a helical span at residues 316-336 (FLIYNTFVWCTAAIPTVVIFS). Residues 337-373 (MNQMWENDPGKSEWLPLVGYFGCSVKDWNSSSWFYSH) are Extracellular-facing. N-linked (GlcNAc...) asparagine glycosylation is present at Asn-365. A helical transmembrane segment spans residues 374-394 (IPIVILNSFNVIMFVLTAIYI). Topologically, residues 395 to 416 (WKVKKGVKSFAQHDERNTTCLE) are cytoplasmic. Residues 417–437 (FNVQTYIQFVRLFLIMGASWL) form a helical membrane-spanning segment. Residues 438 to 454 (LDQLTRLAEDSHLLLDT) are Extracellular-facing. A helical membrane pass occupies residues 455 to 475 (IVLNLTVYLNAAFGILIFVLL). At 476–488 (ILKGSTFKMIMER) the chain is on the cytoplasmic side.

The protein belongs to the G-protein coupled receptor 2 family. Mth subfamily.

It localises to the cell membrane. The chain is Probable G-protein coupled receptor Mth-like 12 (mthl12) from Drosophila melanogaster (Fruit fly).